A 337-amino-acid chain; its full sequence is Nodulation protein D 2 (337 aa).

The HTH lysR-type domain occupies 6 to 63 (LDLNLLVVLDSLMTARNLTAAARSINLSQPAMSAAVARLRAYFGDELFTMRGRTLVPT). The H-T-H motif DNA-binding region spans 23–42 (LTAAARSINLSQPAMSAAVA).

Belongs to the LysR transcriptional regulatory family.

In terms of biological role, nodD regulates the expression of the nodABCFE genes which encode other nodulation proteins. NodD is also a negative regulator of its own expression. Binds flavonoids as inducers. The polypeptide is Nodulation protein D 2 (nodD2) (Bradyrhizobium sp. (strain NC92)).